A 136-amino-acid chain; its full sequence is uncharacterized protein (136 aa).

The N-terminal stretch at methionine 1–alanine 19 is a signal peptide. A helical transmembrane segment spans residues phenylalanine 75 to phenylalanine 97.

It localises to the membrane. This is an uncharacterized protein from Saccharomyces cerevisiae (strain ATCC 204508 / S288c) (Baker's yeast).